A 369-amino-acid polypeptide reads, in one-letter code: DNA replication and repair protein RecF (369 aa).

Residue 30 to 37 (GDNAQGKT) participates in ATP binding.

This sequence belongs to the RecF family.

It localises to the cytoplasm. Its function is as follows. The RecF protein is involved in DNA metabolism; it is required for DNA replication and normal SOS inducibility. RecF binds preferentially to single-stranded, linear DNA. It also seems to bind ATP. The sequence is that of DNA replication and repair protein RecF from Streptococcus equi subsp. zooepidemicus (strain H70).